We begin with the raw amino-acid sequence, 467 residues long: Glutamate--tRNA ligase (467 aa).

The short motif at Pro9 to Gly19 is the 'HIGH' region element. A 'KMSKS' region motif is present at residues Lys237–Arg241. An ATP-binding site is contributed by Lys240.

This sequence belongs to the class-I aminoacyl-tRNA synthetase family. Glutamate--tRNA ligase type 1 subfamily. In terms of assembly, monomer.

The protein localises to the cytoplasm. The catalysed reaction is tRNA(Glu) + L-glutamate + ATP = L-glutamyl-tRNA(Glu) + AMP + diphosphate. In terms of biological role, catalyzes the attachment of glutamate to tRNA(Glu) in a two-step reaction: glutamate is first activated by ATP to form Glu-AMP and then transferred to the acceptor end of tRNA(Glu). The polypeptide is Glutamate--tRNA ligase (Xanthomonas campestris pv. campestris (strain 8004)).